A 233-amino-acid chain; its full sequence is Partner of Y14 and mago (233 aa).

The segment at 1–153 is disordered; sequence MTTYSTDSQG…SNNSDSTVDE (153 aa). Residues 62-97 are a coiled coil; sequence EVVQKAKEKRERERLRQAREEQQRKEQQNKKQQAGA. Over residues 65 to 90 the composition is skewed to basic and acidic residues; it reads QKAKEKRERERLRQAREEQQRKEQQN. Positions 122–142 are enriched in low complexity; it reads KQPQQHTKSSQQKSTTAAAAA. Residues 167–199 are a coiled coil; it reads ADAQQLEVAKKLRKLRKKIREIEAIETKLRSTD.

The protein belongs to the pym family. As to quaternary structure, interacts (via N-terminus) with mago and tsu/Y14; the interaction is direct.

The protein resides in the cytoplasm. It is found in the nucleus. Regulator of the exon junction complex (EJC), a multiprotein complex that associates immediately upstream of the exon-exon junction on mRNAs and serves as a positional landmarks for the intron exon structure of genes and directs post-transcriptional processes in the cytoplasm such as mRNA export, nonsense-mediated mRNA decay (NMD) or translation. In Anopheles gambiae (African malaria mosquito), this protein is Partner of Y14 and mago.